Here is a 79-residue protein sequence, read N- to C-terminus: U-scoloptoxin(15)-Sm1a (79 aa).

A signal peptide spans Met-1 to Ala-25.

It belongs to the scoloptoxin-15 family. Contains 2 disulfide bonds. As to expression, expressed by the venom gland.

It localises to the secreted. The protein is U-scoloptoxin(15)-Sm1a of Scolopendra morsitans (Tanzanian blue ringleg centipede).